The following is a 275-amino-acid chain: Nitrogenase iron protein 1 (275 aa).

Position 9–16 (9–16 (GKGGIGKS)) interacts with ATP. Cysteine 97 is a [4Fe-4S] cluster binding site. Arginine 100 is modified (ADP-ribosylarginine; by dinitrogenase reductase ADP-ribosyltransferase). Cysteine 132 serves as a coordination point for [4Fe-4S] cluster.

The protein belongs to the NifH/BchL/ChlL family. In terms of assembly, homodimer. [4Fe-4S] cluster is required as a cofactor. In terms of processing, the reversible ADP-ribosylation of Arg-100 inactivates the nitrogenase reductase and regulates nitrogenase activity.

It carries out the reaction N2 + 8 reduced [2Fe-2S]-[ferredoxin] + 16 ATP + 16 H2O = H2 + 8 oxidized [2Fe-2S]-[ferredoxin] + 2 NH4(+) + 16 ADP + 16 phosphate + 6 H(+). The key enzymatic reactions in nitrogen fixation are catalyzed by the nitrogenase complex, which has 2 components: the iron protein and the molybdenum-iron protein. This chain is Nitrogenase iron protein 1 (nifH1), found in Methanothermobacter marburgensis (strain ATCC BAA-927 / DSM 2133 / JCM 14651 / NBRC 100331 / OCM 82 / Marburg) (Methanobacterium thermoautotrophicum).